The primary structure comprises 267 residues: Undecaprenyl-diphosphatase (267 aa).

The next 7 membrane-spanning stretches (helical) occupy residues 7-29 (LILGIIEGLTEFLPVSSTGHMIL), 41-61 (FWKSFLIIIQLGSILAVIFVF), 69-89 (LDIWLKLAAGFFPTGVIGLFV), 96-116 (LFNGWVVVGMLIFGGVVFILI), 173-193 (AAEFSFLLAIPTMIIATAYSI), 207-227 (IPLGIGFITAFVVAVLVIKFF), and 239-259 (FGIYRIILGFVFFYLYYSGIL).

The protein belongs to the UppP family.

The protein resides in the cell inner membrane. The enzyme catalyses di-trans,octa-cis-undecaprenyl diphosphate + H2O = di-trans,octa-cis-undecaprenyl phosphate + phosphate + H(+). Its function is as follows. Catalyzes the dephosphorylation of undecaprenyl diphosphate (UPP). Confers resistance to bacitracin. The sequence is that of Undecaprenyl-diphosphatase from Campylobacter jejuni subsp. jejuni serotype O:6 (strain 81116 / NCTC 11828).